The chain runs to 566 residues: F-box/WD repeat-containing protein 5 (566 aa).

Residues 3-49 (EGGTPLLPDSLVYQIFLSLGPADVLAAGLVCRQWQAVSRDEFLWREQ) form the F-box domain. WD repeat units follow at residues 83–125 (VEVQ…DLTI), 126–178 (SLLH…LDSF), 179–238 (ALLS…VKRL), and 239–281 (FKIQ…RIFD). Position 151 is a phosphoserine; by PLK4 (Ser151). Ser284 carries the post-translational modification Phosphoserine. A D-box motif is present at residues 303-311 (RHFLDRVLE). 3 WD repeats span residues 394 to 447 (ALDH…DLLV), 458 to 501 (RALR…RHYN), and 502 to 539 (ICLA…KAWR).

The protein belongs to the FBXW5 family. In terms of assembly, part of the SCF (SKP1-CUL1-F-box) E3 ubiquitin-protein ligase complex SCF(FBXW5) composed of CUL1, SKP1, RBX1 and FBXW5. Component of the DCX(FBXW5) E3 ubiquitin ligase complex, at least composed of (CUL4A or CUL4B), DDB1, FBXW5 and RBX1. Interacts with CDC20, EPS8, TSC1, TSC2 and SASS6. Interacts with TNFAIP8L1; TNFAIP8L1 competes with TSC2 to bind FBXW5 increasing TSC2 stability by preventing its ubiquitination. Post-translationally, phosphorylated at Ser-151 by PLK4 during the G1/S transition, leading to inhibit its ability to ubiquitinate SASS6. Ubiquitinated and degraded by the APC/C complex during mitosis and G1 phase.

Its subcellular location is the cytoplasm. The protein operates within protein modification; protein ubiquitination. Its function is as follows. Substrate recognition component of both SCF (SKP1-CUL1-F-box protein) and DCX (DDB1-CUL4-X-box) E3 ubiquitin-protein ligase complexes. Substrate recognition component of the SCF(FBXW5) E3 ubiquitin-protein ligase complex which mediates the ubiquitination and subsequent proteasomal degradation of SASS6 during S phase, leading to prevent centriole reduplication. The SCF(FBXW5) complex also mediates ubiquitination and degradation of actin-regulator EPS8 during G2 phase, leading to the transient degradation of EPS8 and subsequent cell shape changes required to allow mitotic progression. Substrate-specific adapter of the DCX(FBXW5) E3 ubiquitin-protein ligase complex which mediates the polyubiquitination and subsequent degradation of TSC2. May also act as a negative regulator of MAP3K7/TAK1 signaling in the interleukin-1B (IL1B) signaling pathway. This Homo sapiens (Human) protein is F-box/WD repeat-containing protein 5 (FBXW5).